The following is a 386-amino-acid chain: Latent membrane protein 1 (386 aa).

The Cytoplasmic portion of the chain corresponds to 2-23 (DLDLERGPPGPRRPPRGPPLSS). The helical transmembrane segment at 24 to 44 (SIGLALLLLLLALLFWLYIIM) threads the bilayer. Topologically, residues 45–51 (SNWTGGA) are extracellular. The helical transmembrane segment at 52–72 (LLVLYAFALMLVIIILIIFIF) threads the bilayer. Residues 73–75 (RRD) lie on the Cytoplasmic side of the membrane. A helical transmembrane segment spans residues 76 to 96 (LLCPLGALCLLLLMITLLLIA). Residues 97–106 (LWNLHGQALY) are Extracellular-facing. Residues 107-127 (LGIVLFIFGCLLVLGLWIYLL) traverse the membrane as a helical segment. At 128 to 139 (EILWRLGATIWQ) the chain is on the cytoplasmic side. A helical membrane pass occupies residues 140 to 160 (LLAFFLAFFLDIILLIIALYL). Residues 161–163 (QQN) are Extracellular-facing. The chain crosses the membrane as a helical span at residues 164-184 (WWTLLVDLLWLLLFLAILIWM). The Cytoplasmic portion of the chain corresponds to 185-386 (YYHGQRHSDE…HGPVQLSYYD (202 aa)). Residues 194–232 (EHHHDDSLPHPQQATDDSSNQSDSNSNEGRHLLLVSGAG) are CTAR1. Positions 194 to 386 (EHHHDDSLPH…HGPVQLSYYD (193 aa)) are disordered. 2 stretches are compositionally biased toward low complexity: residues 209–220 (DDSSNQSDSNSN) and 251–267 (NGPQ…PQDP). The segment at 342 to 386 (GGGGHSHDSGHDGIDPHLPTLLLGTSGSGGDDDDPHGPVQLSYYD) is CTAR2. Residues 346–356 (HSHDSGHDGID) are compositionally biased toward basic and acidic residues. Over residues 357-366 (PHLPTLLLGT) the composition is skewed to low complexity.

This sequence belongs to the herpesviridae LMP-1 family. As to quaternary structure, interacts (via PXQXT motif) with host tumor necrosis factor receptor-associated factor (TRAF) proteins TRAF1, TRAF2, TRAF3 and TRAF5. Interacts with TRAF3; this interaction activates B lymphocytes. Interacts with human protein ZMYND11; leading to negatively regulate NF-kappa-B activation. Interacts with host UBE2I; this interaction induces the sumoylation of various cellular proteins. Interacts with host IRF7. Interacts with host TYK2. In terms of processing, ubiquitinated on the N-terminus.

Its subcellular location is the host cell membrane. In terms of biological role, acts as a CD40 functional homolog to prevent apoptosis of infected B-lymphocytes and drive their proliferation. Functions as a constitutively active tumor necrosis factor receptor that induces the activation of several signaling pathways, including those of the NF-kappa-B family. LMP1 signaling leads to up-regulation of antiapoptotic proteins and provide growth signals in latently infected cells. Interacts with host UBE2I and subsequently affects the sumoylation state of several cellular proteins. For example, induces the sumoylation of host IRF7 thereby limiting its transcriptional activity and modulating the activation of innate immune responses. Also inhibits host IFN-alpha-stimulated STAT2 nuclear translocation and interferon-stimulated response element transcriptional activity by interacting with and inhibiting host TYK2. Induces SUMO expression during viral latency thereby dysregulating the host sumoylation processes. The chain is Latent membrane protein 1 (LMP1) from Homo sapiens (Human).